The primary structure comprises 309 residues: Probable HTH-type transcriptional regulator LtrA (309 aa).

The HTH lysR-type domain occupies 1 to 61 (MNLNLLPDLA…QRTTRKLRLS (61 aa)). A DNA-binding region (H-T-H motif) is located at residues 21 to 40 (FSAVARQNGITPSAVSRSVS).

Belongs to the LysR transcriptional regulatory family.

This chain is Probable HTH-type transcriptional regulator LtrA (ltrA), found in Klebsiella pneumoniae.